The chain runs to 376 residues: uncharacterized protein (376 aa).

The Peptidase M14 domain maps to 82 to 372 (KIYDDSAVEK…ATSGILWRAL (291 aa)). Residues His138, Glu141, and His283 each coordinate Zn(2+). Glu344 acts as the Proton donor/acceptor in catalysis.

Belongs to the peptidase M14 family. Zn(2+) is required as a cofactor.

This is an uncharacterized protein from Bacillus subtilis (strain 168).